Reading from the N-terminus, the 467-residue chain is UDP-glycosyltransferase 71D1 (467 aa).

Catalysis depends on His16, which acts as the Proton acceptor. His16 contacts an anthocyanidin. The Charge relay role is filled by Asp122. Residues Thr144, Gln341, His356, Trp359, Asn360, Ser361, and Glu364 each coordinate UDP-alpha-D-glucose. Position 379 (Ala379) interacts with an anthocyanidin. UDP-alpha-D-glucose contacts are provided by Glu380 and Gln381.

The protein belongs to the UDP-glycosyltransferase family.

It catalyses the reaction a flavonol + UDP-alpha-D-glucose = a flavonol 3-O-beta-D-glucoside + UDP + H(+). Its function is as follows. Possesses quercetin 3-O-glucosyltransferase activity in vitro. This chain is UDP-glycosyltransferase 71D1 (UGT71D1), found in Arabidopsis thaliana (Mouse-ear cress).